Consider the following 195-residue polypeptide: Calcineurin B homologous protein 1 (195 aa).

A lipid anchor (N-myristoyl glycine) is attached at Gly2. The short motif at Gly2–Ser6 is the Necessary for association with microtubule and interaction with GAPDH element. EF-hand domains lie at Ser26–Pro61, Ile66–Asp101, Ser110–Val145, and Gln151–Glu186. Ca(2+) is bound by residues Asp123, Asp125, Asp127, Lys129, and Glu134. The short motif at Val138 to Ile147 is the Nuclear export signal 1 element. Asp164, Asp166, Asp168, and Glu175 together coordinate Ca(2+). A Nuclear export signal 2 motif is present at residues Phe176–Val185.

The protein belongs to the calcineurin regulatory subunit family. CHP subfamily. In terms of assembly, monomer. Interacts with STK17B; the interaction occurs in a calcium-independent manner and induces the translocation of CHP1 from the Golgi to the nucleus. Interacts with GAPDH; the interaction is direct, occurs in a N-myristoylation-dependent manner and facilitates the ability of CHP1 to bind microtubules. Interacts with KIF1B (via the C-terminal end of the kinesin-motor domain); the interaction occurs in a calcium-dependent manner. Associates (via C-terminal domain) with microtubules; the association occurs with polymerized microtubules during the cell cycle in a myristoylation- and calcium-independent manner and is enhanced by GAPDH. Interacts with PPP3CA. Interacts with SLC9A1/NHE1 (via the cytoplasmic C-terminal domain); the interaction occurs at the plasma membrane in a calcium-dependent manner and at a domain that is critical for growth factor stimulation of the exchanger. Interacts with SLC9A3; increases SLC9A3 trafficking and activity at the plasma membrane. Phosphorylated; decreased phosphorylation is associated with an increase in SLC9A1/NHE1 Na(+)/H(+) exchange activity. Phosphorylation occurs in serum-dependent manner. The phosphorylation state may regulate the binding to SLC9A1/NHE1. Post-translationally, both N-myristoylation and calcium-mediated conformational changes are essential for its function in exocytic traffic. N-myristoylation is required for its association with microtubules and interaction with GAPDH, but not for the constitutive association to membranes.

Its subcellular location is the nucleus. It is found in the cytoplasm. The protein resides in the cytoskeleton. The protein localises to the endomembrane system. It localises to the endoplasmic reticulum-Golgi intermediate compartment. Its subcellular location is the endoplasmic reticulum. It is found in the cell membrane. The protein resides in the membrane. Calcium-binding protein involved in different processes such as regulation of vesicular trafficking, plasma membrane Na(+)/H(+) exchanger and gene transcription. Involved in the constitutive exocytic membrane traffic. Mediates the association between microtubules and membrane-bound organelles of the endoplasmic reticulum and Golgi apparatus and is also required for the targeting and fusion of transcytotic vesicles (TCV) with the plasma membrane. Functions as an integral cofactor in cell pH regulation by controlling plasma membrane-type Na(+)/H(+) exchange activity. Affects the pH sensitivity of SLC9A1/NHE1 by increasing its sensitivity at acidic pH. Required for the stabilization and localization of SLC9A1/NHE1 at the plasma membrane. Inhibits serum- and GTPase-stimulated Na(+)/H(+) exchange. Plays a role as an inhibitor of ribosomal RNA transcription by repressing the nucleolar UBF1 transcriptional activity. May sequester UBF1 in the nucleoplasm and limit its translocation to the nucleolus. Associates to the ribosomal gene promoter. Acts as a negative regulator of the calcineurin/NFAT signaling pathway. Inhibits NFAT nuclear translocation and transcriptional activity by suppressing the calcium-dependent calcineurin phosphatase activity. Also negatively regulates the kinase activity of the apoptosis-induced kinase STK17B. Inhibits both STK17B auto- and substrate-phosphorylations in a calcium-dependent manner. The polypeptide is Calcineurin B homologous protein 1 (CHP1) (Bos taurus (Bovine)).